The primary structure comprises 227 residues: Cytochrome c oxidase subunit 2 (227 aa).

Topologically, residues 1–14 (MAYPFQLGLQDATS) are mitochondrial intermembrane. A helical transmembrane segment spans residues 15–45 (PIMEELTNFHDHTLMIVFLISSLVLYIISLM). The Mitochondrial matrix portion of the chain corresponds to 46 to 59 (LTTKLTHTSTMDAQ). Residues 60–87 (EVETIWTILPAAILVLIALPSLRILYMM) form a helical membrane-spanning segment. Residues 88–227 (DEINNPVLTV…HFENWSASMV (140 aa)) are Mitochondrial intermembrane-facing. Cu cation contacts are provided by H161, C196, E198, C200, H204, and M207. A Mg(2+)-binding site is contributed by E198.

The protein belongs to the cytochrome c oxidase subunit 2 family. Component of the cytochrome c oxidase (complex IV, CIV), a multisubunit enzyme composed of 14 subunits. The complex is composed of a catalytic core of 3 subunits MT-CO1, MT-CO2 and MT-CO3, encoded in the mitochondrial DNA, and 11 supernumerary subunits COX4I, COX5A, COX5B, COX6A, COX6B, COX6C, COX7A, COX7B, COX7C, COX8 and NDUFA4, which are encoded in the nuclear genome. The complex exists as a monomer or a dimer and forms supercomplexes (SCs) in the inner mitochondrial membrane with NADH-ubiquinone oxidoreductase (complex I, CI) and ubiquinol-cytochrome c oxidoreductase (cytochrome b-c1 complex, complex III, CIII), resulting in different assemblies (supercomplex SCI(1)III(2)IV(1) and megacomplex MCI(2)III(2)IV(2)). Found in a complex with TMEM177, COA6, COX18, COX20, SCO1 and SCO2. Interacts with TMEM177 in a COX20-dependent manner. Interacts with COX20. Interacts with COX16. It depends on Cu cation as a cofactor.

It is found in the mitochondrion inner membrane. The enzyme catalyses 4 Fe(II)-[cytochrome c] + O2 + 8 H(+)(in) = 4 Fe(III)-[cytochrome c] + 2 H2O + 4 H(+)(out). In terms of biological role, component of the cytochrome c oxidase, the last enzyme in the mitochondrial electron transport chain which drives oxidative phosphorylation. The respiratory chain contains 3 multisubunit complexes succinate dehydrogenase (complex II, CII), ubiquinol-cytochrome c oxidoreductase (cytochrome b-c1 complex, complex III, CIII) and cytochrome c oxidase (complex IV, CIV), that cooperate to transfer electrons derived from NADH and succinate to molecular oxygen, creating an electrochemical gradient over the inner membrane that drives transmembrane transport and the ATP synthase. Cytochrome c oxidase is the component of the respiratory chain that catalyzes the reduction of oxygen to water. Electrons originating from reduced cytochrome c in the intermembrane space (IMS) are transferred via the dinuclear copper A center (CU(A)) of subunit 2 and heme A of subunit 1 to the active site in subunit 1, a binuclear center (BNC) formed by heme A3 and copper B (CU(B)). The BNC reduces molecular oxygen to 2 water molecules using 4 electrons from cytochrome c in the IMS and 4 protons from the mitochondrial matrix. This chain is Cytochrome c oxidase subunit 2 (MT-CO2), found in Uromys caudimaculatus (Giant white-tailed rat).